Here is a 161-residue protein sequence, read N- to C-terminus: V-type proton ATPase 16 kDa proteolipid subunit c (161 aa).

Over Met1–Pro15 the chain is Lumenal. A helical membrane pass occupies residues Phe16–Gly36. Topologically, residues Thr37–Ser58 are cytoplasmic. Residues Val59–Leu79 traverse the membrane as a helical segment. Topologically, residues Arg80–His98 are lumenal. A helical membrane pass occupies residues Leu99 to Val119. Residues Gly120–Met137 are Cytoplasmic-facing. The helical transmembrane segment at Ile138–Leu158 threads the bilayer. Over Gly159–Ser161 the chain is Lumenal.

It belongs to the V-ATPase proteolipid subunit family. V-ATPase is a heteromultimeric enzyme made up of two complexes: the ATP-hydrolytic V1 complex and the proton translocation V0 complex. The V1 complex consists of three catalytic AB heterodimers that form a heterohexamer, three peripheral stalks each consisting of EG heterodimers, one central rotor including subunits D and F, and the regulatory subunits C and H. The proton translocation complex V0 consists of the proton transport subunit a, a ring of proteolipid subunits c9c'', rotary subunit d, subunits e and f, and the accessory subunits vah-19/Ac45 and vah-20/PRR.

The protein resides in the membrane. In terms of biological role, proton-conducting pore forming subunit of the V0 complex of vacuolar(H+)-ATPase (V-ATPase), a multisubunit enzyme composed of a peripheral complex (V1) that hydrolyzes ATP and a membrane integral complex (V0) that translocates protons. V-ATPase is responsible for acidifying and maintaining the pH of intracellular compartments and in some cell types, is targeted to the plasma membrane, where it is responsible for acidifying the extracellular environment. The protein is V-type proton ATPase 16 kDa proteolipid subunit c (12) of Ascaris suum (Pig roundworm).